The chain runs to 281 residues: Acetyl-coenzyme A carboxylase carboxyl transferase subunit beta (281 aa).

A disordered region spans residues 1 to 23; that stretch reads MAWFKREKKGISTSTEEKKEAPD. Positions 25–281 constitute a CoA carboxyltransferase N-terminal domain; sequence LWNKCPNCKK…LAAFLKMMKN (257 aa). Residues Cys29, Cys32, Cys48, and Cys51 each contribute to the Zn(2+) site. Residues 29 to 51 form a C4-type zinc finger; that stretch reads CPNCKKALHSADLLENKYVCQYC.

The protein belongs to the AccD/PCCB family. Acetyl-CoA carboxylase is a heterohexamer composed of biotin carboxyl carrier protein (AccB), biotin carboxylase (AccC) and two subunits each of ACCase subunit alpha (AccA) and ACCase subunit beta (AccD). Requires Zn(2+) as cofactor.

It is found in the cytoplasm. The enzyme catalyses N(6)-carboxybiotinyl-L-lysyl-[protein] + acetyl-CoA = N(6)-biotinyl-L-lysyl-[protein] + malonyl-CoA. It participates in lipid metabolism; malonyl-CoA biosynthesis; malonyl-CoA from acetyl-CoA: step 1/1. Functionally, component of the acetyl coenzyme A carboxylase (ACC) complex. Biotin carboxylase (BC) catalyzes the carboxylation of biotin on its carrier protein (BCCP) and then the CO(2) group is transferred by the transcarboxylase to acetyl-CoA to form malonyl-CoA. This chain is Acetyl-coenzyme A carboxylase carboxyl transferase subunit beta, found in Pedobacter heparinus (strain ATCC 13125 / DSM 2366 / CIP 104194 / JCM 7457 / NBRC 12017 / NCIMB 9290 / NRRL B-14731 / HIM 762-3).